The primary structure comprises 43 residues: Metallothionein-2 (43 aa).

Met1 bears the Blocked amino end (Met) mark.

The protein belongs to the metallothionein superfamily. Type 5 family.

This protein binds cations of several transition elements. Thought to be involved in metal ion homeostasis. In Drosophila melanogaster (Fruit fly), this protein is Metallothionein-2 (MtnB).